The sequence spans 28 residues: Small integral membrane protein 47 (28 aa).

Residues 7–24 (VTLAMALFTILTSIYFFN) traverse the membrane as a helical segment.

It is found in the membrane. The chain is Small integral membrane protein 47 from Homo sapiens (Human).